A 298-amino-acid polypeptide reads, in one-letter code: Ribonuclease HII (298 aa).

A disordered region spans residues 1 to 57 (MIREPQKSAKAASKSSAPRARSSVAKATSTKATSSKAASSKAAPSKAGADAGAAKPR). Positions 8–55 (SAKAASKSSAPRARSSVAKATSTKATSSKAASSKAAPSKAGADAGAAK) are enriched in low complexity. Residues 85 to 273 (WPVAGCDEAG…VAAAWRKIEG (189 aa)) form the RNase H type-2 domain. Positions 91, 92, and 182 each coordinate a divalent metal cation.

The protein belongs to the RNase HII family. The cofactor is Mn(2+). Mg(2+) serves as cofactor.

Its subcellular location is the cytoplasm. It catalyses the reaction Endonucleolytic cleavage to 5'-phosphomonoester.. Endonuclease that specifically degrades the RNA of RNA-DNA hybrids. This Rhodopseudomonas palustris (strain BisB5) protein is Ribonuclease HII.